A 1121-amino-acid polypeptide reads, in one-letter code: PR domain zinc finger protein 10 (1121 aa).

Disordered stretches follow at residues 1-24 (MEAK…NTPQ) and 92-125 (TEAS…MDDW). The segment covering 106 to 124 (VDSEDEEEDNDSEDSEMDD) has biased composition (acidic residues). Residues 173–290 (LPLVLYIDRF…PKQELKVWYA (118 aa)) enclose the SET domain. The N-terminal PR domain; essential for transcriptional activation stretch occupies residues 192–295 (IPKRTQFGPL…KVWYAASYAE (104 aa)). A C2H2-type 1 zinc finger spans residues 319-341 (WPCYECNRRFMSSEQLQQHLNMH). Disordered stretches follow at residues 350–387 (RPKS…SADK) and 419–473 (ESME…PHLT). Positions 351-374 (PKSRGRGRGRKRFGGARRPGRRTK) are enriched in basic residues. C2H2-type zinc fingers lie at residues 500–522 (FKCP…MRFH), 529–551 (HVCH…LVLH), 557–579 (YSCL…VGIH), 585–608 (FLCP…RSFH), 613–635 (FQCS…MLRH), 641–664 (FLCS…QRMH), 696–719 (FKCR…SKRH), 741–764 (YYCQ…LKNH), and 803–826 (VCCP…RKKH). A C-terminal glutamine-rich region; essential for transcriptional activation region spans residues 871-1101 (QAMTELSQTL…PAGGQQATTQ (231 aa)). A disordered region spans residues 1077–1097 (VPSTATQGHPDPLEQPAGGQQ).

It belongs to the class V-like SAM-binding methyltransferase superfamily.

It localises to the nucleus. Its function is as follows. Transcriptional activator, essential for early embryonic development and survival of embryonic stem cells (ESCs). Supports cell growth and survival during early development by transcriptionally activating the expression of the translation initiation factor EIF3B, to sustain global translation. Activates the transcription of FLNC. This Danio rerio (Zebrafish) protein is PR domain zinc finger protein 10 (prdm10).